The following is a 222-amino-acid chain: Putative ankyrin repeat protein L36 (222 aa).

ANK repeat units lie at residues 1–14 (MVKY…NVDA), 15–44 (QNSR…NIYA), 45–74 (NDNH…NIRA), 76–104 (EDSA…TNYE), 105–134 (YSDY…KITD), 136–161 (AMFM…SLPC), and 163–191 (SYSE…KINK).

In Acanthamoeba polyphaga (Amoeba), this protein is Putative ankyrin repeat protein L36.